The following is a 185-amino-acid chain: Ribosome-recycling factor (185 aa).

Belongs to the RRF family.

The protein resides in the cytoplasm. Functionally, responsible for the release of ribosomes from messenger RNA at the termination of protein biosynthesis. May increase the efficiency of translation by recycling ribosomes from one round of translation to another. The sequence is that of Ribosome-recycling factor from Bacillus licheniformis (strain ATCC 14580 / DSM 13 / JCM 2505 / CCUG 7422 / NBRC 12200 / NCIMB 9375 / NCTC 10341 / NRRL NRS-1264 / Gibson 46).